The following is a 530-amino-acid chain: Bifunctional purine biosynthesis protein PurH (530 aa).

The MGS-like domain maps to 1–148; it reads MNNARPIRRA…KNHKDVTIVV (148 aa).

Belongs to the PurH family.

It catalyses the reaction (6R)-10-formyltetrahydrofolate + 5-amino-1-(5-phospho-beta-D-ribosyl)imidazole-4-carboxamide = 5-formamido-1-(5-phospho-D-ribosyl)imidazole-4-carboxamide + (6S)-5,6,7,8-tetrahydrofolate. The catalysed reaction is IMP + H2O = 5-formamido-1-(5-phospho-D-ribosyl)imidazole-4-carboxamide. It participates in purine metabolism; IMP biosynthesis via de novo pathway; 5-formamido-1-(5-phospho-D-ribosyl)imidazole-4-carboxamide from 5-amino-1-(5-phospho-D-ribosyl)imidazole-4-carboxamide (10-formyl THF route): step 1/1. Its pathway is purine metabolism; IMP biosynthesis via de novo pathway; IMP from 5-formamido-1-(5-phospho-D-ribosyl)imidazole-4-carboxamide: step 1/1. The sequence is that of Bifunctional purine biosynthesis protein PurH from Vibrio vulnificus (strain YJ016).